Here is a 325-residue protein sequence, read N- to C-terminus: uncharacterized protein (325 aa).

A helical membrane pass occupies residues 67–87; sequence WIPFFLLFSSVVVLGGLWWLG.

The protein resides in the membrane. This is an uncharacterized protein from Synechocystis sp. (strain ATCC 27184 / PCC 6803 / Kazusa).